Here is a 323-residue protein sequence, read N- to C-terminus: MDSKQQTVRLSDGHFIPILGFGTYAPQEVPKSKATEATKIAIDAGFRHIDSASMYQNEKEVGLAIRSKIADGTVKREDIFYTSKVWCTFHRPELVRVCLEQSLKQLQLDYVDLYLIHFPMAMKPGENYLPKDENGKLIYDAVDICDTWEAMEKCKDAGLAKSIGVSNFNRRQLEKILKKPGLKYKPVCNQVECHPYLNQGKLLDFCRSKDIVLVAYSALGSHREKQWVDQSSPVLLDNPVLGSMAKKYNRTPALIALRYQLQRGVVVLAKSFSEKRIKENMQVFEFQLTSEDMKVLDDLNKNIRYISGSSFKDHPDFPFWDEY.

Residues 20-24 (GFGTY) and Asp50 contribute to the NADP(+) site. Tyr55 acts as the Proton donor in catalysis. His117 is a binding site for substrate. Residues 166–167 (SN), Gln190, 216–221 (YSALGS), and 270–280 (KSFSEKRIKEN) each bind NADP(+).

This sequence belongs to the aldo/keto reductase family. In terms of assembly, monomer. Three forms are detected, probably due to post-translational modifications. In terms of tissue distribution, mainly found in liver. Also expressed weakly in kidney.

Active toward androgens, estrogens, and xenobiotic substrates. Also exhibits low 20 alpha-HSD activity. Shows a-stereospecificity in hydrogen transfer between cofactors and substrates (A-specific). Preferentially catalyzes the reduction of 4-androstenedione, 5-alpha-androstane-3,17-dione, androsterone and dehydroepiandrosterone to testosterone, dihydrotestosterone, 5-alpha-androstane-3-alpha,17-beta-diol and 5-androstene-3-beta,17-beta-diol, respectively. The protein is Estradiol 17 beta-dehydrogenase 5 (Akr1c6) of Mus musculus (Mouse).